Reading from the N-terminus, the 342-residue chain is Tetraacyldisaccharide 4'-kinase (342 aa).

Position 68 to 75 (68 to 75) interacts with ATP; the sequence is TVGGTGKT.

It belongs to the LpxK family.

It catalyses the reaction a lipid A disaccharide + ATP = a lipid IVA + ADP + H(+). It functions in the pathway glycolipid biosynthesis; lipid IV(A) biosynthesis; lipid IV(A) from (3R)-3-hydroxytetradecanoyl-[acyl-carrier-protein] and UDP-N-acetyl-alpha-D-glucosamine: step 6/6. Functionally, transfers the gamma-phosphate of ATP to the 4'-position of a tetraacyldisaccharide 1-phosphate intermediate (termed DS-1-P) to form tetraacyldisaccharide 1,4'-bis-phosphate (lipid IVA). This Burkholderia pseudomallei (strain K96243) protein is Tetraacyldisaccharide 4'-kinase.